The following is a 492-amino-acid chain: Catalase isozyme 1 (492 aa).

Catalysis depends on residues His65 and Asn138. Tyr348 is a binding site for heme.

The protein belongs to the catalase family. As to quaternary structure, homotetramer. Heme serves as cofactor.

It is found in the peroxisome. The enzyme catalyses 2 H2O2 = O2 + 2 H2O. Its function is as follows. Occurs in almost all aerobically respiring organisms and serves to protect cells from the toxic effects of hydrogen peroxide. This is Catalase isozyme 1 (CAT1) from Gossypium hirsutum (Upland cotton).